A 285-amino-acid polypeptide reads, in one-letter code: (3S)-malyl-CoA thioesterase (285 aa).

The substrate site is built by R70 and E122. The Mg(2+) site is built by E122 and D148.

It belongs to the HpcH/HpaI aldolase family. In terms of assembly, homodimer or homotrimer. Requires Mg(2+) as cofactor.

It catalyses the reaction (S)-malyl-CoA + H2O = (S)-malate + CoA + H(+). Functionally, catalyzes the hydrolysis of (3S)-malyl-CoA to (3S)-malate and free CoA. Inactive towards beta-methylmalyl-CoA and other CoA esters. This is (3S)-malyl-CoA thioesterase from Cereibacter sphaeroides (strain KD131 / KCTC 12085) (Rhodobacter sphaeroides).